The following is a 218-amino-acid chain: Small ribosomal subunit protein uS5 (218 aa).

The span at 1-10 (MTQATNQTPG) shows a compositional bias: polar residues. The interval 1–63 (MTQATNQTPG…GRDERDSEWQ (63 aa)) is disordered. The segment covering 11-25 (QDVPGAADVPAAAEG) has biased composition (low complexity). The segment covering 31 to 63 (GERRGGGGGRGGDRRGRGDRRGRGRDERDSEWQ) has biased composition (basic and acidic residues). The region spanning 62 to 125 (WQERVIQIRR…ADGKKHLVKV (64 aa)) is the S5 DRBM domain.

The protein belongs to the universal ribosomal protein uS5 family. In terms of assembly, part of the 30S ribosomal subunit. Contacts proteins S4 and S8.

With S4 and S12 plays an important role in translational accuracy. Its function is as follows. Located at the back of the 30S subunit body where it stabilizes the conformation of the head with respect to the body. This is Small ribosomal subunit protein uS5 from Synechococcus sp. (strain RCC307).